The sequence spans 312 residues: Gamma-soluble NSF attachment protein (312 aa).

The interval Lys281–Cys312 is disordered. Phosphoserine is present on Ser284. Position 287 is a phosphothreonine (Thr287). Acidic residues predominate over residues Ala300–Cys312. Residue Ser308 is modified to Phosphoserine.

This sequence belongs to the SNAP family. Interacts with RAB11FIP5. Interacts with VTI1A.

It localises to the membrane. It is found in the golgi apparatus. Required for vesicular transport between the endoplasmic reticulum and the Golgi apparatus. This Homo sapiens (Human) protein is Gamma-soluble NSF attachment protein.